Here is a 398-residue protein sequence, read N- to C-terminus: Spermatogenesis associated 6-like protein (398 aa).

Positions 170–215 (KLNGPANNRKKKPKEKNSDQLSKGTPFWGPSPQRLHLHRPTQRNPG) are disordered. Residues serine 269 and serine 272 each carry the phosphoserine modification.

It belongs to the SPATA6 family.

In Rattus norvegicus (Rat), this protein is Spermatogenesis associated 6-like protein (Spata6l).